We begin with the raw amino-acid sequence, 354 residues long: Protein NDH-DEPENDENT CYCLIC ELECTRON FLOW 5 (354 aa).

A chloroplast-targeting transit peptide spans 1–49 (MALVHYMNVSRSTFPLSRSSKINLSSSFASLPLQFHKNIKRLESSVPPS).

It is found in the plastid. It localises to the chloroplast thylakoid membrane. Required for both formation and activity of the chloroplast NAD(P)H dehydrogenase (NDH) complex of the photosynthetic electron transport chain. May function in assembly or stabilization of the NDH complex. The polypeptide is Protein NDH-DEPENDENT CYCLIC ELECTRON FLOW 5 (Arabidopsis thaliana (Mouse-ear cress)).